A 339-amino-acid polypeptide reads, in one-letter code: DNA-directed RNA polymerase subunit alpha (339 aa).

Positions 1–233 (MVREEVAGST…DLFLPFLHAE (233 aa)) are alpha N-terminal domain (alpha-NTD). The segment at 264 to 339 (KKGIPLNCIF…IDLLKNKLSF (76 aa)) is alpha C-terminal domain (alpha-CTD).

The protein belongs to the RNA polymerase alpha chain family. As to quaternary structure, in plastids the minimal PEP RNA polymerase catalytic core is composed of four subunits: alpha, beta, beta', and beta''. When a (nuclear-encoded) sigma factor is associated with the core the holoenzyme is formed, which can initiate transcription.

The protein localises to the plastid. It localises to the chloroplast. It catalyses the reaction RNA(n) + a ribonucleoside 5'-triphosphate = RNA(n+1) + diphosphate. Its function is as follows. DNA-dependent RNA polymerase catalyzes the transcription of DNA into RNA using the four ribonucleoside triphosphates as substrates. This is DNA-directed RNA polymerase subunit alpha from Elymus californicus (California bottlebrush grass).